The sequence spans 198 residues: Recombination protein RecR (198 aa).

The C4-type zinc finger occupies 57-72; sequence CSVCGHITDRDPCYIC. In terms of domain architecture, Toprim spans 80-175; that stretch reads SVVCVVQEPK…KVTRIAHGLP (96 aa).

Belongs to the RecR family.

In terms of biological role, may play a role in DNA repair. It seems to be involved in an RecBC-independent recombinational process of DNA repair. It may act with RecF and RecO. The chain is Recombination protein RecR from Bacillus anthracis (strain A0248).